A 917-amino-acid chain; its full sequence is Catenin alpha (917 aa).

A phosphothreonine mark is found at Thr-643 and Thr-645. Phosphoserine is present on residues Ser-659 and Ser-662. Basic and acidic residues predominate over residues 878-890; it reads PLVRPEKPEEVRA. Residues 878 to 905 are disordered; sequence PLVRPEKPEEVRAKVRKGSQKKVQNPIH.

The protein belongs to the vinculin/alpha-catenin family. In terms of assembly, interacts with arm/armadillo protein. In terms of processing, rapidly phosphorylated by CK2 and more slowly by CK1.

The protein resides in the cytoplasm. It localises to the cytoskeleton. The protein localises to the cell junction. It is found in the adherens junction. Its subcellular location is the cell membrane. Its function is as follows. Associates with the cytoplasmic domain of a variety of cadherins. The association of catenins to cadherins produces a complex which is linked to the actin filament network, and which seems to be of primary importance for cadherins cell-adhesion properties. This is Catenin alpha from Drosophila melanogaster (Fruit fly).